We begin with the raw amino-acid sequence, 304 residues long: Methionyl-tRNA formyltransferase (304 aa).

Residue 110–113 participates in (6S)-5,6,7,8-tetrahydrofolate binding; the sequence is SLLP.

Belongs to the Fmt family.

It carries out the reaction L-methionyl-tRNA(fMet) + (6R)-10-formyltetrahydrofolate = N-formyl-L-methionyl-tRNA(fMet) + (6S)-5,6,7,8-tetrahydrofolate + H(+). Its function is as follows. Attaches a formyl group to the free amino group of methionyl-tRNA(fMet). The formyl group appears to play a dual role in the initiator identity of N-formylmethionyl-tRNA by promoting its recognition by IF2 and preventing the misappropriation of this tRNA by the elongation apparatus. The polypeptide is Methionyl-tRNA formyltransferase (Gluconobacter oxydans (strain 621H) (Gluconobacter suboxydans)).